The primary structure comprises 264 residues: ORC1-type DNA replication protein 2 (264 aa).

ATP is bound by residues 73–77, Tyr220, and Arg232; that span reads TGKSL.

It belongs to the CDC6/cdc18 family.

Its function is as follows. Involved in regulation of DNA replication. In Halobacterium salinarum (strain ATCC 700922 / JCM 11081 / NRC-1) (Halobacterium halobium), this protein is ORC1-type DNA replication protein 2 (orc2).